The sequence spans 880 residues: Valine--tRNA ligase (880 aa).

The short motif at 47-57 (PNITGKLHLGH) is the 'HIGH' region element. The short motif at 526–530 (KMSKS) is the 'KMSKS' region element. Lysine 529 contributes to the ATP binding site. Residues 810–845 (LLDLVDREKELERLNKEKTKLEGEILRVEKKLSNER) are a coiled coil.

It belongs to the class-I aminoacyl-tRNA synthetase family. ValS type 1 subfamily. In terms of assembly, monomer.

Its subcellular location is the cytoplasm. It carries out the reaction tRNA(Val) + L-valine + ATP = L-valyl-tRNA(Val) + AMP + diphosphate. Catalyzes the attachment of valine to tRNA(Val). As ValRS can inadvertently accommodate and process structurally similar amino acids such as threonine, to avoid such errors, it has a 'posttransfer' editing activity that hydrolyzes mischarged Thr-tRNA(Val) in a tRNA-dependent manner. The chain is Valine--tRNA ligase from Clostridium perfringens (strain 13 / Type A).